The following is a 255-amino-acid chain: Acetylglutamate kinase (255 aa).

Residues 40–41 (GG), Arg-62, and Asn-153 contribute to the substrate site.

This sequence belongs to the acetylglutamate kinase family. ArgB subfamily.

It localises to the cytoplasm. It catalyses the reaction N-acetyl-L-glutamate + ATP = N-acetyl-L-glutamyl 5-phosphate + ADP. The protein operates within amino-acid biosynthesis; L-arginine biosynthesis; N(2)-acetyl-L-ornithine from L-glutamate: step 2/4. In terms of biological role, catalyzes the ATP-dependent phosphorylation of N-acetyl-L-glutamate. This is Acetylglutamate kinase from Bacillus cereus (strain ATCC 10987 / NRS 248).